The primary structure comprises 288 residues: Protease HtpX homolog (288 aa).

Helical transmembrane passes span 1-21 and 23-43; these read MHTI…LLAG and IIGG…MNFF. Residue His-130 participates in Zn(2+) binding. Glu-131 is a catalytic residue. His-134 serves as a coordination point for Zn(2+). A run of 2 helical transmembrane segments spans residues 140–160 and 175–195; these read ILIS…AEMA and IGGL…AMII. Glu-204 is a Zn(2+) binding site.

The protein belongs to the peptidase M48B family. Zn(2+) serves as cofactor.

Its subcellular location is the cell inner membrane. In Persephonella marina (strain DSM 14350 / EX-H1), this protein is Protease HtpX homolog.